The primary structure comprises 98 residues: NADH-ubiquinone oxidoreductase chain 4L (98 aa).

The next 3 membrane-spanning stretches (helical) occupy residues 1-21 (MSMVYINIFLAFTLSFMGLLI), 30-50 (LLCLEGMMLSLFVMMTITILI), and 61-81 (IILLVFAACEAALGLSLLVMI).

It belongs to the complex I subunit 4L family. As to quaternary structure, core subunit of respiratory chain NADH dehydrogenase (Complex I) which is composed of 45 different subunits.

The protein resides in the mitochondrion inner membrane. It catalyses the reaction a ubiquinone + NADH + 5 H(+)(in) = a ubiquinol + NAD(+) + 4 H(+)(out). Its function is as follows. Core subunit of the mitochondrial membrane respiratory chain NADH dehydrogenase (Complex I) which catalyzes electron transfer from NADH through the respiratory chain, using ubiquinone as an electron acceptor. Part of the enzyme membrane arm which is embedded in the lipid bilayer and involved in proton translocation. The protein is NADH-ubiquinone oxidoreductase chain 4L (MT-ND4L) of Neovison vison (American mink).